The sequence spans 377 residues: ATP phosphoribosyltransferase regulatory subunit (377 aa).

This sequence belongs to the class-II aminoacyl-tRNA synthetase family. HisZ subfamily. In terms of assembly, heteromultimer composed of HisG and HisZ subunits.

The protein localises to the cytoplasm. It functions in the pathway amino-acid biosynthesis; L-histidine biosynthesis; L-histidine from 5-phospho-alpha-D-ribose 1-diphosphate: step 1/9. Functionally, required for the first step of histidine biosynthesis. May allow the feedback regulation of ATP phosphoribosyltransferase activity by histidine. The polypeptide is ATP phosphoribosyltransferase regulatory subunit (Sinorhizobium medicae (strain WSM419) (Ensifer medicae)).